The primary structure comprises 434 residues: D-inositol 3-phosphate glycosyltransferase (434 aa).

H26 provides a ligand contact to 1D-myo-inositol 3-phosphate. Residues 32–33 (QP) and G40 contribute to the UDP-N-acetyl-alpha-D-glucosamine site. Residues 37–42 (DAGGMN), K95, Y128, T152, and R172 each bind 1D-myo-inositol 3-phosphate. Positions 246 and 251 each coordinate UDP-N-acetyl-alpha-D-glucosamine. Mg(2+) contacts are provided by Y321, R322, and A324. Positions 334 and 342 each coordinate UDP-N-acetyl-alpha-D-glucosamine. A Mg(2+)-binding site is contributed by T348.

This sequence belongs to the glycosyltransferase group 1 family. MshA subfamily. Homodimer.

It carries out the reaction 1D-myo-inositol 3-phosphate + UDP-N-acetyl-alpha-D-glucosamine = 1D-myo-inositol 2-acetamido-2-deoxy-alpha-D-glucopyranoside 3-phosphate + UDP + H(+). Catalyzes the transfer of a N-acetyl-glucosamine moiety to 1D-myo-inositol 3-phosphate to produce 1D-myo-inositol 2-acetamido-2-deoxy-glucopyranoside 3-phosphate in the mycothiol biosynthesis pathway. The chain is D-inositol 3-phosphate glycosyltransferase from Thermobifida fusca (strain YX).